We begin with the raw amino-acid sequence, 583 residues long: Radixin (583 aa).

Residues 5-295 (INVRVTTMDA…GNHELYMRRR (291 aa)) form the FERM domain. Residues 60–63 (KLNK) and Lys278 each bind a 1,2-diacyl-sn-glycero-3-phospho-(1D-myo-inositol). Disordered stretches follow at residues 310–336 (REEK…AEKE) and 436–527 (KKKE…VKKQ). Basic and acidic residues-rich tracts occupy residues 436-447 (KKKEEEASEWQH) and 455-464 (DLEKTKEELK). Positions 469–480 (APPPPPPPPVIP) are enriched in pro residues. Basic and acidic residues-rich tracts occupy residues 483-492 (ENEHDEHDEN) and 506-525 (MNHR…ERVK).

It is found in the cell membrane. It localises to the cytoplasm. The protein resides in the cytoskeleton. In terms of biological role, probably plays a crucial role in the binding of the barbed end of actin filaments to the plasma membrane. The chain is Radixin (RDX) from Gallus gallus (Chicken).